Reading from the N-terminus, the 410-residue chain is Protein trichome birefringence-like 34 (410 aa).

Residues 13-33 traverse the membrane as a helical; Signal-anchor for type II membrane protein segment; sequence TSFHTIAAVLVAGLIFTAVFL. Residues 133 to 135 carry the GDS motif motif; that stretch reads GDS. Positions 383-397 match the DCXHWCLPGXXDXWN motif motif; sequence DCIHWCLPGVPDVWN.

The protein belongs to the PC-esterase family. TBL subfamily.

It localises to the golgi apparatus membrane. Functionally, may act as a bridging protein that binds pectin and other cell wall polysaccharides. Probably involved in maintaining esterification of pectins. May be involved in the specific O-acetylation of cell wall polymers. The polypeptide is Protein trichome birefringence-like 34 (TBL34) (Arabidopsis thaliana (Mouse-ear cress)).